The primary structure comprises 309 residues: UPF0252 protein PH0672 (309 aa).

A run of 2 helical transmembrane segments spans residues 5-25 and 106-126; these read SVII…NESI and AVLT…LMIF.

It belongs to the UPF0252 family.

Its subcellular location is the cell membrane. This is UPF0252 protein PH0672 from Pyrococcus horikoshii (strain ATCC 700860 / DSM 12428 / JCM 9974 / NBRC 100139 / OT-3).